Reading from the N-terminus, the 164-residue chain is Large ribosomal subunit protein uL10 (164 aa).

It belongs to the universal ribosomal protein uL10 family. As to quaternary structure, part of the ribosomal stalk of the 50S ribosomal subunit. The N-terminus interacts with L11 and the large rRNA to form the base of the stalk. The C-terminus forms an elongated spine to which L12 dimers bind in a sequential fashion forming a multimeric L10(L12)X complex.

Its function is as follows. Forms part of the ribosomal stalk, playing a central role in the interaction of the ribosome with GTP-bound translation factors. The chain is Large ribosomal subunit protein uL10 (rplJ) from Helicobacter pylori (strain J99 / ATCC 700824) (Campylobacter pylori J99).